The following is a 719-amino-acid chain: Transcription factor E4F1 (719 aa).

A required for ubiquitin ligase activity region spans residues 20-63 (NIITIQTTLGDEDEDIHKCGKCLAEFSALDAFIQHKLSRSCKRT). Residues 59 to 125 (SCKRTQDPQT…SEDESSSPSK (67 aa)) are disordered. Over residues 98-109 (EKQDAKVASGDK) the composition is skewed to basic and acidic residues. The interval 128-207 (WKLNTEGRYV…GLAFRESGAL (80 aa)) is mediates dimerization and DNA-binding. C2H2-type zinc fingers lie at residues 136 to 158 (YVCDICAKTFKTTNILRTHMFTH) and 164 to 186 (FVCEMCETAFRTKGSLIRHKRRH). A C2H2-type 3; degenerate zinc finger spans residues 192–216 (YRCNQCGLAFRESGALTRHLKSLTP). 5 consecutive C2H2-type zinc fingers follow at residues 365 to 387 (YKCPHCERMFKTLNYLRVHVKGH), 393 to 415 (FKCLTCQKEFLTGYVLKKHMETH), 421 to 443 (YKCGECGKQFKAIGHVREHMRAH), 449 to 471 (YHCSFCDKSYKTKNALQVHHRTH), and 477 to 499 (YVCQHCSRGFREKSALVRHIRHH). Residues 505–527 (FKCSKCGRGFAEHGTLNRHLRAK) form a C2H2-type 9; degenerate zinc finger.

It is found in the nucleus. The protein localises to the nucleoplasm. It localises to the cytoplasm. It carries out the reaction S-ubiquitinyl-[E2 ubiquitin-conjugating enzyme]-L-cysteine + [acceptor protein]-L-lysine = [E2 ubiquitin-conjugating enzyme]-L-cysteine + N(6)-ubiquitinyl-[acceptor protein]-L-lysine.. The protein operates within protein modification; protein ubiquitination. May function as a transcriptional repressor. May also function as a ubiquitin ligase. Functions in cell survival and proliferation through control of the cell cycle. This is Transcription factor E4F1 (e4f1) from Danio rerio (Zebrafish).